A 300-amino-acid chain; its full sequence is uncharacterized protein (300 aa).

The interval 230-251 (LRQSTSRQSISRQSISRQSTSR) is disordered. Over residues 231 to 251 (RQSTSRQSISRQSISRQSTSR) the composition is skewed to low complexity.

This is an uncharacterized protein from Acanthamoeba polyphaga (Amoeba).